We begin with the raw amino-acid sequence, 364 residues long: GDP-fucose transporter 1 (364 aa).

The next 8 helical transmembrane spans lie at 34 to 56 (FLLR…ISMV), 76 to 98 (VTFY…AACC), 111 to 130 (LRVA…MITF), 140 to 162 (VAFY…YLLL), 167 to 185 (SFYA…WLGV), 195 to 214 (SWLG…LNAI), 227 to 249 (IWRL…LLLL), and 264 to 286 (AHFW…VTGL).

This sequence belongs to the TPT transporter family. SLC35C subfamily.

It localises to the golgi apparatus membrane. It carries out the reaction GMP(out) + GDP-beta-L-fucose(in) = GMP(in) + GDP-beta-L-fucose(out). In terms of biological role, antiporter specific for GDP-l-fucose and depending on the concomitant reverse transport of GMP. Involved in GDP-fucose import from the cytoplasm into the Golgi lumen. The sequence is that of GDP-fucose transporter 1 from Homo sapiens (Human).